The chain runs to 226 residues: UPF0758 protein SE_1336 (226 aa).

The region spanning 102–224 (QITHPSDVAS…FTSLVEAGYF (123 aa)) is the MPN domain. Positions 173, 175, and 186 each coordinate Zn(2+). The short motif at 173 to 186 (HNHPSGDVTPSKED) is the JAMM motif element.

The protein belongs to the UPF0758 family.

The sequence is that of UPF0758 protein SE_1336 from Staphylococcus epidermidis (strain ATCC 12228 / FDA PCI 1200).